Reading from the N-terminus, the 146-residue chain is MNQVSEGSRTVSVEEMPRVLQLRAANTNITEGESTSQSRNVRWEEDVVDNENMNKKKTKICCIFHPAQEEEDPEQLCPSDHEHSSSSSSSSSSESDDDDKYNSEQRRQRRIERRRRRQKTNRPASPNAYEIQPDYSEYRKRMNANV.

The segment at 23–146 (RAANTNITEG…EYRKRMNANV (124 aa)) is disordered. Residues 24-40 (AANTNITEGESTSQSRN) are compositionally biased toward polar residues. Over residues 107–120 (RQRRIERRRRRQKT) the composition is skewed to basic residues.

The protein belongs to the YPI1 family.

It is found in the nucleus. In terms of biological role, regulator of type 1 phosphatases which maintains protein phosphatase activity under strict control. This is Type 1 phosphatases regulator YPI1 (YPI1) from Candida glabrata (strain ATCC 2001 / BCRC 20586 / JCM 3761 / NBRC 0622 / NRRL Y-65 / CBS 138) (Yeast).